Reading from the N-terminus, the 147-residue chain is Formiminotransferase N-terminal subdomain-containing protein (147 aa).

An N-terminal signal peptide occupies residues 1 to 20 (MSSSRVGLRLAACLLNVSEA).

It belongs to the formiminotransferase family. As to expression, widely expressed with highest levels in liver and skeletal muscle, and moderate levels in kidney, bone and pancreas.

This Homo sapiens (Human) protein is Formiminotransferase N-terminal subdomain-containing protein (FTCDNL1).